Here is a 230-residue protein sequence, read N- to C-terminus: Ureidoacrylate amidohydrolase RutB (230 aa).

D24 (proton acceptor) is an active-site residue. K133 is an active-site residue. C166 functions as the Nucleophile in the catalytic mechanism.

Belongs to the isochorismatase family. RutB subfamily.

The catalysed reaction is (Z)-3-ureidoacrylate + H2O + H(+) = (Z)-3-aminoacrylate + NH4(+) + CO2. The enzyme catalyses (Z)-3-ureidoacrylate + H2O = (Z)-3-aminoacrylate + carbamate + H(+). It catalyses the reaction (Z)-2-methylureidoacrylate + H2O + H(+) = (Z)-2-methylaminoacrylate + NH4(+) + CO2. Hydrolyzes ureidoacrylate to form aminoacrylate and carbamate. The carbamate hydrolyzes spontaneously, thereby releasing one of the nitrogen atoms of the pyrimidine ring as ammonia and one of its carbon atoms as CO2. This Escherichia coli (strain K12 / MC4100 / BW2952) protein is Ureidoacrylate amidohydrolase RutB.